Reading from the N-terminus, the 598-residue chain is Elongation factor 4 (598 aa).

One can recognise a tr-type G domain in the interval 2–184 (KNIRNFSIIA…EIVAKIPAPE (183 aa)). Residues 14 to 19 (DHGKST) and 131 to 134 (NKID) each bind GTP.

The protein belongs to the TRAFAC class translation factor GTPase superfamily. Classic translation factor GTPase family. LepA subfamily.

It is found in the cell inner membrane. The catalysed reaction is GTP + H2O = GDP + phosphate + H(+). Its function is as follows. Required for accurate and efficient protein synthesis under certain stress conditions. May act as a fidelity factor of the translation reaction, by catalyzing a one-codon backward translocation of tRNAs on improperly translocated ribosomes. Back-translocation proceeds from a post-translocation (POST) complex to a pre-translocation (PRE) complex, thus giving elongation factor G a second chance to translocate the tRNAs correctly. Binds to ribosomes in a GTP-dependent manner. The chain is Elongation factor 4 from Haemophilus influenzae (strain 86-028NP).